Reading from the N-terminus, the 510-residue chain is Abscisic acid 8'-hydroxylase 2 (510 aa).

Residues 3–23 (FLLFFVFVTAAVLCFVVPAFL) form a helical membrane-spanning segment. Heme is bound at residue Cys441.

It belongs to the cytochrome P450 family. It depends on heme as a cofactor.

It is found in the membrane. It carries out the reaction 2-cis-(+)-abscisate + reduced [NADPH--hemoprotein reductase] + O2 = (+)-8'-hydroxyabscisate + oxidized [NADPH--hemoprotein reductase] + H2O + H(+). It functions in the pathway plant hormone degradation; abscisic acid degradation. Functionally, involved in the oxidative degradation of abscisic acid. The chain is Abscisic acid 8'-hydroxylase 2 (CYP707A6) from Oryza sativa subsp. japonica (Rice).